Consider the following 356-residue polypeptide: DNA polymerase IV (356 aa).

The 182-residue stretch at 6–187 folds into the UmuC domain; the sequence is IIHIDMDYFF…LDIGDFPGVG (182 aa). Residues aspartate 10 and aspartate 105 each coordinate Mg(2+). Glutamate 106 is a catalytic residue.

This sequence belongs to the DNA polymerase type-Y family. As to quaternary structure, monomer. Requires Mg(2+) as cofactor.

It is found in the cytoplasm. The catalysed reaction is DNA(n) + a 2'-deoxyribonucleoside 5'-triphosphate = DNA(n+1) + diphosphate. Its function is as follows. Poorly processive, error-prone DNA polymerase involved in untargeted mutagenesis. Copies undamaged DNA at stalled replication forks, which arise in vivo from mismatched or misaligned primer ends. These misaligned primers can be extended by PolIV. Exhibits no 3'-5' exonuclease (proofreading) activity. May be involved in translesional synthesis, in conjunction with the beta clamp from PolIII. In Staphylococcus aureus (strain Mu50 / ATCC 700699), this protein is DNA polymerase IV.